Reading from the N-terminus, the 573-residue chain is Sulfite reductase [NADPH] hemoprotein beta-component (573 aa).

[4Fe-4S] cluster-binding residues include cysteine 438, cysteine 444, cysteine 483, and cysteine 487. Residue cysteine 487 participates in siroheme binding.

It belongs to the nitrite and sulfite reductase 4Fe-4S domain family. As to quaternary structure, alpha(8)-beta(8). The alpha component is a flavoprotein, the beta component is a hemoprotein. The cofactor is siroheme. [4Fe-4S] cluster serves as cofactor.

It carries out the reaction hydrogen sulfide + 3 NADP(+) + 3 H2O = sulfite + 3 NADPH + 4 H(+). It functions in the pathway sulfur metabolism; hydrogen sulfide biosynthesis; hydrogen sulfide from sulfite (NADPH route): step 1/1. Its function is as follows. Component of the sulfite reductase complex that catalyzes the 6-electron reduction of sulfite to sulfide. This is one of several activities required for the biosynthesis of L-cysteine from sulfate. In Nitrosomonas eutropha (strain DSM 101675 / C91 / Nm57), this protein is Sulfite reductase [NADPH] hemoprotein beta-component.